The primary structure comprises 328 residues: uncharacterized protein (328 aa).

This is an uncharacterized protein from Schizosaccharomyces pombe (strain 972 / ATCC 24843) (Fission yeast).